Consider the following 619-residue polypeptide: uncharacterized protein (619 aa).

The first 21 residues, 1 to 21 (MKKLIAIIAVAAVVIAGFVFT), serve as a signal peptide directing secretion.

This is an uncharacterized protein from Archaeoglobus fulgidus (strain ATCC 49558 / DSM 4304 / JCM 9628 / NBRC 100126 / VC-16).